Here is a 76-residue protein sequence, read N- to C-terminus: Defensin-like protein 164 (76 aa).

The first 25 residues, 1–25 (MAKLLCSYLFICMFVLSGFLVFSSA), serve as a signal peptide directing secretion. 4 disulfides stabilise this stretch: C31–C76, C41–C61, C46–C70, and C50–C72.

The protein belongs to the DEFL family.

Its subcellular location is the secreted. The sequence is that of Defensin-like protein 164 (LCR38) from Arabidopsis thaliana (Mouse-ear cress).